We begin with the raw amino-acid sequence, 134 residues long: Cytochrome c-550 (134 aa).

Gln1 carries the pyrrolidone carboxylic acid modification. Positions 15, 18, 19, and 100 each coordinate heme c.

Binds 1 heme c group covalently per subunit.

Functionally, electron donor for nitrous-oxide reductase. This is Cytochrome c-550 from Paracoccus pantotrophus (Thiosphaera pantotropha).